A 966-amino-acid polypeptide reads, in one-letter code: Next to BRCA1 gene 1 protein (966 aa).

A PB1 domain is found at 4-85 (QVTLNVTFKN…NQLQMQVHEG (82 aa)). A Phosphoserine modification is found at Ser-116. The segment at 212 to 264 (SWHIACNNCQRRIVGVRYQCSLCPSYNICEDCEAGPYGHDTNHVLLKLRRPVV) adopts a ZZ-type zinc-finger fold. Residues Cys-217, Cys-220, Cys-231, Cys-234, Cys-240, Cys-243, His-250, and His-254 each coordinate Zn(2+). Residues 542–636 (ASERELYIPS…KRKAENIASV (95 aa)) form an ATG8 family protein-binding region. Thr-586 bears the Phosphothreonine; by GSK3-alpha mark. A phosphoserine mark is found at Ser-590, Ser-596, and Ser-625. The segment covering 699–718 (EAVMEEEEDEEDEEEEDELK) has biased composition (acidic residues). Disordered stretches follow at residues 699 to 728 (EAVM…SSAS), 750 to 792 (MYSS…QPQE), and 848 to 879 (VPDQ…HHGS). The tract at residues 727–738 (ASSEDYIIILPE) is ATG8 family protein-binding. A UBA domain is found at 913–957 (SEDQTAALMAHLFEMGFCDRQLNLRLLKKHNYNILQVVTELLQLN).

In terms of assembly, homooligomer and heterooligomer. Interacts with TRIM55. Interacts with titin/TTN. Interacts with RNF29, USP8, MAP1LC3A, MAP1LC3B, MAP1LC3C, GABARAP, GABARAPL1 and GABARAPL2. Binds to ubiquitin and ubiquitinated proteins. Interacts with SQSTM1. Interacts with TAX1BP1. Interacts with IRF3; this interaction mediates autophagic degradation of IRF3. Interacts with IL12A and IL12B. As to quaternary structure, (Microbial infection) Interacts with Influenza A virus protein PB1; this interaction promotes NBR1-mediated selective autophagic degradation of MAVS. (Microbial infection) Cleaved by S.pyogenes SpeB protease; leading to its degradation. Degradation by SpeB prevents autophagy, promoting to S.pyogenes intracellular replication. Post-translationally, phosphorylated by GSK3A; this phosphorylation inhibits NBR1 involvement in the formation of ubiquitinated protein aggregates.

The protein localises to the cytoplasm. The protein resides in the cytoplasmic vesicle. It is found in the autophagosome. It localises to the lysosome. Its subcellular location is the myofibril. The protein localises to the sarcomere. The protein resides in the m line. Ubiquitin-binding autophagy adapter that participates in different processes including host defense or intracellular homeostasis. Possesses a double function during the selective autophagy by acting as a shuttle bringing ubiquitinated proteins to autophagosomes and also by participating in the formation of protein aggregates. Plays a role in the regulation of the innate immune response by modulating type I interferon production and targeting ubiquitinated IRF3 for autophagic degradation. In response to oxidative stress, promotes an increase in SQSTM1 levels, phosphorylation, and body formation by preventing its autophagic degradation. In turn, activates the KEAP1-NRF2/NFE2L2 antioxidant pathway. Also plays non-autophagy role by mediating the shuttle of IL-12 to late endosome for subsequent secretion. The protein is Next to BRCA1 gene 1 protein (NBR1) of Homo sapiens (Human).